Here is a 258-residue protein sequence, read N- to C-terminus: Acyl-[acyl-carrier-protein]--UDP-N-acetylglucosamine O-acyltransferase (258 aa).

The protein belongs to the transferase hexapeptide repeat family. LpxA subfamily. Homotrimer.

It is found in the cytoplasm. It catalyses the reaction a (3R)-hydroxyacyl-[ACP] + UDP-N-acetyl-alpha-D-glucosamine = a UDP-3-O-[(3R)-3-hydroxyacyl]-N-acetyl-alpha-D-glucosamine + holo-[ACP]. The protein operates within glycolipid biosynthesis; lipid IV(A) biosynthesis; lipid IV(A) from (3R)-3-hydroxytetradecanoyl-[acyl-carrier-protein] and UDP-N-acetyl-alpha-D-glucosamine: step 1/6. In terms of biological role, involved in the biosynthesis of lipid A, a phosphorylated glycolipid that anchors the lipopolysaccharide to the outer membrane of the cell. This chain is Acyl-[acyl-carrier-protein]--UDP-N-acetylglucosamine O-acyltransferase, found in Stutzerimonas stutzeri (strain A1501) (Pseudomonas stutzeri).